Consider the following 245-residue polypeptide: 1-(5-phosphoribosyl)-5-[(5-phosphoribosylamino)methylideneamino] imidazole-4-carboxamide isomerase (245 aa).

The Proton acceptor role is filled by D7. D129 serves as the catalytic Proton donor.

This sequence belongs to the HisA/HisF family.

It localises to the cytoplasm. It carries out the reaction 1-(5-phospho-beta-D-ribosyl)-5-[(5-phospho-beta-D-ribosylamino)methylideneamino]imidazole-4-carboxamide = 5-[(5-phospho-1-deoxy-D-ribulos-1-ylimino)methylamino]-1-(5-phospho-beta-D-ribosyl)imidazole-4-carboxamide. Its pathway is amino-acid biosynthesis; L-histidine biosynthesis; L-histidine from 5-phospho-alpha-D-ribose 1-diphosphate: step 4/9. In Pectobacterium atrosepticum (strain SCRI 1043 / ATCC BAA-672) (Erwinia carotovora subsp. atroseptica), this protein is 1-(5-phosphoribosyl)-5-[(5-phosphoribosylamino)methylideneamino] imidazole-4-carboxamide isomerase.